The primary structure comprises 226 residues: CRISPR-associated endonuclease Cas3-HD (226 aa).

Residues 9–204 form the HD Cas3-type domain; it reads GRDCLQTYED…HVLTVCDNWG (196 aa). Mg(2+) is bound by residues aspartate 56, histidine 74, histidine 101, and histidine 102.

This sequence belongs to the CRISPR-associated nuclease Cas3-HD family. In terms of assembly, monomer. Can form a Cascade complex with Csa5, Cas7, Cas5a, Cas3 and Cas8a2. Requires Mg(2+) as cofactor.

In terms of biological role, CRISPR (clustered regularly interspaced short palindromic repeat), is an adaptive immune system that provides protection against mobile genetic elements (viruses, transposable elements and conjugative plasmids). CRISPR clusters contain sequences complementary to antecedent mobile elements and target invading nucleic acids. CRISPR clusters are transcribed and processed into CRISPR RNA (crRNA). Cas3 plus Cascade participate in CRISPR interference, the third stage of CRISPR immunity. Acts as a ssDNA and ssRNA nuclease, probably with both exo- and endonuclease activities. Activity is higher for DNA than RNA. The sequence is that of CRISPR-associated endonuclease Cas3-HD (cas3') from Thermoproteus tenax (strain ATCC 35583 / DSM 2078 / JCM 9277 / NBRC 100435 / Kra 1).